The chain runs to 111 residues: Putative gamma-glutamylcyclotransferase BH1612 (111 aa).

14 to 17 lines the substrate pocket; it reads YGHL. E55 acts as the Proton acceptor in catalysis.

The protein belongs to the gamma-glutamylcyclotransferase family.

Putative gamma-glutamylcyclotransferase. This Halalkalibacterium halodurans (strain ATCC BAA-125 / DSM 18197 / FERM 7344 / JCM 9153 / C-125) (Bacillus halodurans) protein is Putative gamma-glutamylcyclotransferase BH1612.